We begin with the raw amino-acid sequence, 715 residues long: MSLFLSFFISILLCFFNGATTTQFDFSTLAISNLKLLGDARLSNGIVGLTRDLSVPNSGAGKVLYSNPIRFRQPGTHFPTSFSSFFSFSITNVNPSSIGGGLAFVISPDANSIGIAGGSLGLTGPNGSGSKFVAVEFDTLMDVDFKDINSNHVGFDVNGVVSSVSGDLGTVNIDLKSGNTINSWIEYDGLTRVFNVSVSYSNLKPKVPILSFPLDLDRYVNDFMFVGFSGSTQGSTEIHSIEWWSFSSSFGSSLGSGSGSPPPRANLMNPKANSVKSPPPLASQPSSSAIPISSNTQLKTSSSSSCHSRFCKENPGTIAGVVTAGAFFLALFAGALFWVYSKKFKRVERSDSFASEIIKAPKEFSYKELKAGTKNFNESRIIGHGAFGVVYRGILPETGDIVAVKRCSHSSQDKKNEFLSELSIIGSLRHRNLVRLQGWCHEKGEILLVYDLMPNGSLDKALFESRFTLPWDHRKKILLGVASALAYLHRECENQVIHRDVKSSNIMLDESFNAKLGDFGLARQIEHDKSPEATVAAGTMGYLAPEYLLTGRASEKTDVFSYGAVVLEVVSGRRPIEKDLNVQRHNVGVNPNLVEWVWGLYKEGKVSAAADSRLEGKFDEGEMWRVLVVGLACSHPDPAFRPTMRSVVQMLIGEADVPVVPKSRPTMSFSTSHLLLSLQDTLSDCNTVALNSSRSSSWSVPEHNVIIRSDDDHLV.

Residues 1–21 (MSLFLSFFISILLCFFNGATT) form the signal peptide. The tract at residues 22 to 247 (TQFDFSTLAI…IHSIEWWSFS (226 aa)) is legume-lectin like. Over 22–317 (TQFDFSTLAI…SRFCKENPGT (296 aa)) the chain is Extracellular. Residues N126 and N195 are each glycosylated (N-linked (GlcNAc...) asparagine). Residues 255-296 (GSGSGSPPPRANLMNPKANSVKSPPPLASQPSSSAIPISSNT) are disordered. Low complexity predominate over residues 283-296 (SQPSSSAIPISSNT). A helical membrane pass occupies residues 318-338 (IAGVVTAGAFFLALFAGALFW). Residues 339–715 (VYSKKFKRVE…IIRSDDDHLV (377 aa)) lie on the Cytoplasmic side of the membrane. The region spanning 376-676 (FNESRIIGHG…MSFSTSHLLL (301 aa)) is the Protein kinase domain. ATP-binding positions include 382–390 (IGHGAFGVV) and K405. D500 acts as the Proton acceptor in catalysis.

In the C-terminal section; belongs to the protein kinase superfamily. Ser/Thr protein kinase family. This sequence in the N-terminal section; belongs to the leguminous lectin family.

The protein localises to the cell membrane. It catalyses the reaction L-seryl-[protein] + ATP = O-phospho-L-seryl-[protein] + ADP + H(+). The enzyme catalyses L-threonyl-[protein] + ATP = O-phospho-L-threonyl-[protein] + ADP + H(+). The sequence is that of L-type lectin-domain containing receptor kinase VIII.1 (LECRK81) from Arabidopsis thaliana (Mouse-ear cress).